Consider the following 946-residue polypeptide: Bifunctional glutamine synthetase adenylyltransferase/adenylyl-removing enzyme (946 aa).

The adenylyl removase stretch occupies residues 1–440 (MKPLSSPLQQ…VFNELIGDDE (440 aa)). The tract at residues 449–946 (SEQWRELWQD…ASWQKWLVEE (498 aa)) is adenylyl transferase.

This sequence belongs to the GlnE family. Mg(2+) serves as cofactor.

It carries out the reaction [glutamine synthetase]-O(4)-(5'-adenylyl)-L-tyrosine + phosphate = [glutamine synthetase]-L-tyrosine + ADP. The enzyme catalyses [glutamine synthetase]-L-tyrosine + ATP = [glutamine synthetase]-O(4)-(5'-adenylyl)-L-tyrosine + diphosphate. Involved in the regulation of glutamine synthetase GlnA, a key enzyme in the process to assimilate ammonia. When cellular nitrogen levels are high, the C-terminal adenylyl transferase (AT) inactivates GlnA by covalent transfer of an adenylyl group from ATP to specific tyrosine residue of GlnA, thus reducing its activity. Conversely, when nitrogen levels are low, the N-terminal adenylyl removase (AR) activates GlnA by removing the adenylyl group by phosphorolysis, increasing its activity. The regulatory region of GlnE binds the signal transduction protein PII (GlnB) which indicates the nitrogen status of the cell. In Escherichia coli O45:K1 (strain S88 / ExPEC), this protein is Bifunctional glutamine synthetase adenylyltransferase/adenylyl-removing enzyme.